The primary structure comprises 390 residues: Queuine tRNA-ribosyltransferase (390 aa).

Aspartate 92 (proton acceptor) is an active-site residue. Substrate-binding positions include 92–96, aspartate 146, glutamine 195, and glycine 222; that span reads DSGGF. Residues 253-259 are RNA binding; it reads GVGTPED. Aspartate 272 acts as the Nucleophile in catalysis. The segment at 277–281 is RNA binding; important for wobble base 34 recognition; that stretch reads TRNAR. Zn(2+) is bound by residues cysteine 310, cysteine 312, cysteine 315, and histidine 354.

Belongs to the queuine tRNA-ribosyltransferase family. In terms of assembly, homodimer. Within each dimer, one monomer is responsible for RNA recognition and catalysis, while the other monomer binds to the replacement base PreQ1. Requires Zn(2+) as cofactor.

The enzyme catalyses 7-aminomethyl-7-carbaguanine + guanosine(34) in tRNA = 7-aminomethyl-7-carbaguanosine(34) in tRNA + guanine. Its pathway is tRNA modification; tRNA-queuosine biosynthesis. Its function is as follows. Catalyzes the base-exchange of a guanine (G) residue with the queuine precursor 7-aminomethyl-7-deazaguanine (PreQ1) at position 34 (anticodon wobble position) in tRNAs with GU(N) anticodons (tRNA-Asp, -Asn, -His and -Tyr). Catalysis occurs through a double-displacement mechanism. The nucleophile active site attacks the C1' of nucleotide 34 to detach the guanine base from the RNA, forming a covalent enzyme-RNA intermediate. The proton acceptor active site deprotonates the incoming PreQ1, allowing a nucleophilic attack on the C1' of the ribose to form the product. After dissociation, two additional enzymatic reactions on the tRNA convert PreQ1 to queuine (Q), resulting in the hypermodified nucleoside queuosine (7-(((4,5-cis-dihydroxy-2-cyclopenten-1-yl)amino)methyl)-7-deazaguanosine). The sequence is that of Queuine tRNA-ribosyltransferase from Paracidovorax citrulli (strain AAC00-1) (Acidovorax citrulli).